The sequence spans 213 residues: Large ribosomal subunit protein uL18c (213 aa).

The protein belongs to the universal ribosomal protein uL18 family.

It is found in the plastid. The protein localises to the apicoplast. The polypeptide is Large ribosomal subunit protein uL18c (RPL18) (Plasmodium falciparum (isolate 3D7)).